Consider the following 22-residue polypeptide: Melittin-like peptide (22 aa).

Residue Q22 is modified to Glutamine amide.

Expressed by the skin dorsal glands.

Its subcellular location is the secreted. This Rana temporaria (European common frog) protein is Melittin-like peptide.